A 121-amino-acid polypeptide reads, in one-letter code: Large ribosomal subunit protein uL18 (121 aa).

This sequence belongs to the universal ribosomal protein uL18 family. Part of the 50S ribosomal subunit; part of the 5S rRNA/L5/L18/L25 subcomplex. Contacts the 5S and 23S rRNAs.

This is one of the proteins that bind and probably mediate the attachment of the 5S RNA into the large ribosomal subunit, where it forms part of the central protuberance. In Pelobacter propionicus (strain DSM 2379 / NBRC 103807 / OttBd1), this protein is Large ribosomal subunit protein uL18.